Consider the following 1027-residue polypeptide: D-2-hydroxyglutarate dehydrogenase (1027 aa).

One can recognise an FAD-binding PCMH-type domain in the interval 48–284; sequence YQQLPQAILF…CEAKLNLLLI (237 aa). (R)-2-hydroxyglutarate is bound by residues arginine 405 and histidine 503. A 4Fe-4S ferredoxin-type domain is found at 665–696; the sequence is HEVKAAMDTCLACKACASQCPIKIDVPSFRAK. 4 residues coordinate [4Fe-4S] cluster: cysteine 674, cysteine 677, cysteine 680, and cysteine 684.

It in the N-terminal section; belongs to the FAD-binding oxidoreductase/transferase type 4 family. As to quaternary structure, homotetramer. [4Fe-4S] cluster is required as a cofactor. The cofactor is FAD.

The enzyme catalyses (R)-2-hydroxyglutarate + A = 2-oxoglutarate + AH2. Its function is as follows. Catalyzes the oxidation of D-2-hydroxyglutarate (D-2-HGA) to 2-oxoglutarate. Provides the way to recycle D-2-HGA produced during L-serine synthesis by SerA, by converting it back to 2-oxoglutarate. The physiological molecule that functions as the primary electron acceptor during D-2-HGA oxidation is unknown. This Haemophilus influenzae (strain ATCC 51907 / DSM 11121 / KW20 / Rd) protein is D-2-hydroxyglutarate dehydrogenase.